Consider the following 104-residue polypeptide: L-rhamnose mutarotase (104 aa).

Position 18 (Tyr18) interacts with substrate. Catalysis depends on His22, which acts as the Proton donor. Substrate contacts are provided by residues Tyr41 and 76–77; that span reads WW.

This sequence belongs to the rhamnose mutarotase family. In terms of assembly, homodimer.

The protein resides in the cytoplasm. It carries out the reaction alpha-L-rhamnose = beta-L-rhamnose. It participates in carbohydrate metabolism; L-rhamnose metabolism. Its function is as follows. L-rhamnose mutarotase involved in ulvan degradation. Ulvan is the main polysaccharide component of the Ulvales (green seaweed) cell wall. It is composed of disaccharide building blocks comprising 3-sulfated rhamnose (Rha3S) linked to D-glucuronic acid (GlcA), L-iduronic acid (IduA), or D-xylose (Xyl). L-rhamnose mutarotase catalyzes the anomeric conversion of alpha- to beta-L-rhamnose. The polypeptide is L-rhamnose mutarotase (rhaM) (Formosa agariphila (strain DSM 15362 / KCTC 12365 / LMG 23005 / KMM 3901 / M-2Alg 35-1)).